A 379-amino-acid polypeptide reads, in one-letter code: MLWKSLIALCVIGAAVAEQTPVFLWGANSVAKPSLKTVSQVEFAEQLAALLEDHMVVAFEENGLSSKDFLCSNSQAQSCYAQLQGVSPKTYYTSVENPSEALRSVAAKREHNSIDASGKLTTPAKCAVGTALFVTFEDAAESREASLESHDAAIAAISKQFECKVAYLYLAAPSTAPVVQRRTRRDTAATTGGIMWKSTNQFQIFYTALLYNGNPITVTDLKLTNSSSTKLSVVMDTSVADKPITFDVVYNGGYFSLSNLVYDNNNFRSSGVNAPTTFSYSCGNLTLESAAVNNMYNTLSFKSLQLQAPFDGTYKEDFPFGDSWDCVGFVTPGILMGLFVVALLLVIMFVGVCWMMDINTMDRFDDPKGKTITINAAAE.

Residues 1–17 (MLWKSLIALCVIGAAVA) form the signal peptide. Topologically, residues 18-333 (EQTPVFLWGA…WDCVGFVTPG (316 aa)) are lumenal. Residues N225 and N284 are each glycosylated (N-linked (GlcNAc...) asparagine). C282 and C326 form a disulfide bridge. Residues 334–354 (ILMGLFVVALLLVIMFVGVCW) traverse the membrane as a helical segment. Residues 355-379 (MMDINTMDRFDDPKGKTITINAAAE) are Cytoplasmic-facing.

The protein belongs to the vacuolar ATPase subunit S1 family. Accessory component of the multisubunit proton-transporting vacuolar (V)-ATPase protein pump. May interact with ATP6AP2.

The protein resides in the endoplasmic reticulum membrane. In terms of biological role, accessory subunit of the proton-transporting vacuolar (V)-ATPase protein pump, which is required for luminal acidification of secretory vesicles. This is V-type proton ATPase subunit S1 from Drosophila melanogaster (Fruit fly).